The following is a 364-amino-acid chain: tRNA 2-selenouridine synthase (364 aa).

A Rhodanese domain is found at 14-137 (LLADTPLIDV…LRQTAIQATW (124 aa)). The active-site S-selanylcysteine intermediate is the Cys97.

Belongs to the SelU family. Monomer.

It carries out the reaction 5-methylaminomethyl-2-thiouridine(34) in tRNA + selenophosphate + (2E)-geranyl diphosphate + H2O + H(+) = 5-methylaminomethyl-2-selenouridine(34) in tRNA + (2E)-thiogeraniol + phosphate + diphosphate. It catalyses the reaction 5-methylaminomethyl-2-thiouridine(34) in tRNA + (2E)-geranyl diphosphate = 5-methylaminomethyl-S-(2E)-geranyl-thiouridine(34) in tRNA + diphosphate. The catalysed reaction is 5-methylaminomethyl-S-(2E)-geranyl-thiouridine(34) in tRNA + selenophosphate + H(+) = 5-methylaminomethyl-2-(Se-phospho)selenouridine(34) in tRNA + (2E)-thiogeraniol. The enzyme catalyses 5-methylaminomethyl-2-(Se-phospho)selenouridine(34) in tRNA + H2O = 5-methylaminomethyl-2-selenouridine(34) in tRNA + phosphate. Involved in the post-transcriptional modification of the uridine at the wobble position (U34) of tRNA(Lys), tRNA(Glu) and tRNA(Gln). Catalyzes the conversion of 2-thiouridine (S2U-RNA) to 2-selenouridine (Se2U-RNA). Acts in a two-step process involving geranylation of 2-thiouridine (S2U) to S-geranyl-2-thiouridine (geS2U) and subsequent selenation of the latter derivative to 2-selenouridine (Se2U) in the tRNA chain. This Salmonella enteritidis PT4 (strain P125109) protein is tRNA 2-selenouridine synthase.